A 582-amino-acid polypeptide reads, in one-letter code: Zinc finger protein 319 (582 aa).

Residues 1-14 (MSESWQQPPQTQPQ) show a composition bias toward low complexity. Positions 1–39 (MSESWQQPPQTQPQQPQPPQPQHHAEPPPALAEHTLPPG) are disordered. The C2H2-type 1 zinc finger occupies 76–100 (PKCGVCGHDLAHLSSPHEHQCLAGH). Residues 104–126 (FQCTQCLKIFHQATDLLEHQCVQ) form a C2H2-type 2; degenerate zinc finger. K130 participates in a covalent cross-link: Glycyl lysine isopeptide (Lys-Gly) (interchain with G-Cter in SUMO2). A C2H2-type 3 zinc finger spans residues 132–154 (FVCGVCKMGFSLLTSLAQHHSSH). Residues 174–196 (EPATTAAPSLPAAPAPSTVTPAE) are compositionally biased toward low complexity. A disordered region spans residues 174–198 (EPATTAAPSLPAAPAPSTVTPAEQA). C2H2-type zinc fingers lie at residues 202–224 (YSCPICQKPFKHLSELSRHERIH), 230–252 (YKCTLCDKSFSQSSHLVHHKRTH), and 258–280 (YKCAVCEKTFKHRSHLVRHMYAH). S281 carries the phosphoserine modification. A C2H2-type 7; degenerate zinc finger spans residues 287-309 (FRCNVCELHFKESSELLQHPCTP). C2H2-type zinc fingers lie at residues 315–337 (FRCGECQKAFKRPSDLRQHERTH), 343–365 (FKCDLCPMGFKQQYALMRHRRTH), and 371–393 (FKCGLCEKGFGQPSHLLYHQHVH). The C2H2-type 11; degenerate zinc finger occupies 399 to 421 (FKCPVCQKGFDQSAELLRHKCLP). The segment at 428 to 450 (FKCPVCNKAYKRASALQKHQLAH) adopts a C2H2-type 12 zinc-finger fold. The C2H2-type 13; degenerate zinc finger occupies 458–480 (LRCTLCERRFFSSSEFVQHRCDP). C2H2-type zinc fingers lie at residues 486 to 508 (LKCPDCEKRFKYASDLQRHRRVH), 514 to 536 (YKCPNCDKAFKQREHLNKHQGVH), and 542 to 564 (FKCVWCGERFLDVALLQEHSAQH).

This sequence belongs to the krueppel C2H2-type zinc-finger protein family.

It localises to the nucleus. May be involved in transcriptional regulation. In Homo sapiens (Human), this protein is Zinc finger protein 319 (ZNF319).